Consider the following 453-residue polypeptide: UDP-glycosyltransferase 76E1 (453 aa).

UDP-alpha-D-glucose-binding positions include Ser272, 331–333, 348–356, and 370–373; these read APQ, HCGWNSTLE, and TGDQ.

This sequence belongs to the UDP-glycosyltransferase family.

Functionally, possesses low quercetin 3-O-glucosyltransferase and 7-O-glucosyltransferase activities in vitro. This is UDP-glycosyltransferase 76E1 (UGT76E1) from Arabidopsis thaliana (Mouse-ear cress).